A 104-amino-acid chain; its full sequence is Small ribosomal subunit protein bS18c (104 aa).

Belongs to the bacterial ribosomal protein bS18 family. Part of the 30S ribosomal subunit.

The protein localises to the plastid. It is found in the chloroplast. This Lotus japonicus (Lotus corniculatus var. japonicus) protein is Small ribosomal subunit protein bS18c.